Here is a 1098-residue protein sequence, read N- to C-terminus: Bifunctional helicase and thymine dioxygenase JBP2 (1098 aa).

The interval 1-540 (MLNGLTRVST…PPLFVPTRLA (540 aa)) is thymine dioxygenase. 3 residues coordinate Fe cation: histidine 415, aspartate 417, and histidine 465. 2-oxoglutarate is bound at residue arginine 479. Positions 541 to 1098 (SHLAPVQLAA…RYQESVRESE (558 aa)) are DNA Helicase. One can recognise a Helicase ATP-binding domain in the interval 555–730 (VERTEKQSGC…YRLVGWVNKG (176 aa)). Position 568–575 (568–575 (MTMGLGKT)) interacts with ATP. The short motif at 681-684 (DEGH) is the DEAH box element. Residues 897–1057 (VLVDIVLRVQ…ALPDELEDCA (161 aa)) enclose the Helicase C-terminal domain.

It in the C-terminal section; belongs to the SNF2/RAD54 helicase family. The protein in the N-terminal section; belongs to the TET family. JBP2 subfamily. Fe(2+) serves as cofactor.

Its subcellular location is the nucleus. It catalyses the reaction ATP + H2O = ADP + phosphate + H(+). The enzyme catalyses thymine + 2-oxoglutarate + O2 = 5-hydroxymethyluracil + succinate + CO2. Dioxygenase that catalyzes the first step of DNA base J (beta-d-glucosyl-HOMedU) biosynthesis by converting thymine to 5-hydroxymethyluracil (HOMedU). DNA base J is a hypermodified thymidine residue found in the genome of kinetoplastid parasites, which is localized primarily to repetitive DNA, namely the telomeres, and is implicated in the regulation of antigenic variation. Probably also acts as a DNA helicase. Recognizes and binds specific regions of the genome, hydrolyzes ATP and allows the DNA base J de novo synthesis. Involved in initial synthesis of DNA base J, JBP1 being able to act via the basal level of DNA base J and propagate further synthesis. In contrast to JBP1, it does not specifically bind DNA base J, however it binds chromatin. This Leishmania major protein is Bifunctional helicase and thymine dioxygenase JBP2 (JBP2).